The primary structure comprises 622 residues: Probable potassium transport system protein Kup 1 (622 aa).

Helical transmembrane passes span 7 to 27 (LLVL…TSPL), 50 to 70 (LISL…VLFL), 96 to 116 (TAIL…DAMI), 132 to 152 (VTPA…LLLF), 165 to 185 (FFGP…FVHI), 210 to 230 (VGIV…ALYA), 244 to 264 (WFTV…AFVL), 282 to 302 (ALLP…QAVI), 334 to 354 (IYLP…VFLF), 360 to 380 (LATA…VLSF), 391 to 411 (TWWA…FLGA), and 416 to 436 (IHDG…IMWT).

It belongs to the HAK/KUP transporter (TC 2.A.72) family.

Its subcellular location is the cell inner membrane. The catalysed reaction is K(+)(in) + H(+)(in) = K(+)(out) + H(+)(out). Its function is as follows. Transport of potassium into the cell. Likely operates as a K(+):H(+) symporter. The protein is Probable potassium transport system protein Kup 1 of Rhizobium meliloti (strain 1021) (Ensifer meliloti).